Consider the following 244-residue polypeptide: ATP synthase subunit b 2 (244 aa).

The helical transmembrane segment at 2–22 threads the bilayer; the sequence is LIDWFTIVAQIINFLILVFLL.

This sequence belongs to the ATPase B chain family. As to quaternary structure, F-type ATPases have 2 components, F(1) - the catalytic core - and F(0) - the membrane proton channel. F(1) has five subunits: alpha(3), beta(3), gamma(1), delta(1), epsilon(1). F(0) has four main subunits: a(1), b(1), b'(1) and c(10-14). The alpha and beta chains form an alternating ring which encloses part of the gamma chain. F(1) is attached to F(0) by a central stalk formed by the gamma and epsilon chains, while a peripheral stalk is formed by the delta, b and b' chains.

It is found in the cellular thylakoid membrane. In terms of biological role, f(1)F(0) ATP synthase produces ATP from ADP in the presence of a proton or sodium gradient. F-type ATPases consist of two structural domains, F(1) containing the extramembraneous catalytic core and F(0) containing the membrane proton channel, linked together by a central stalk and a peripheral stalk. During catalysis, ATP synthesis in the catalytic domain of F(1) is coupled via a rotary mechanism of the central stalk subunits to proton translocation. Component of the F(0) channel, it forms part of the peripheral stalk, linking F(1) to F(0). The sequence is that of ATP synthase subunit b 2 from Crocosphaera subtropica (strain ATCC 51142 / BH68) (Cyanothece sp. (strain ATCC 51142)).